The sequence spans 82 residues: Exodeoxyribonuclease 7 small subunit (82 aa).

It belongs to the XseB family. In terms of assembly, heterooligomer composed of large and small subunits.

The protein resides in the cytoplasm. The catalysed reaction is Exonucleolytic cleavage in either 5'- to 3'- or 3'- to 5'-direction to yield nucleoside 5'-phosphates.. Functionally, bidirectionally degrades single-stranded DNA into large acid-insoluble oligonucleotides, which are then degraded further into small acid-soluble oligonucleotides. The polypeptide is Exodeoxyribonuclease 7 small subunit (Pectobacterium carotovorum subsp. carotovorum (strain PC1)).